The primary structure comprises 92 residues: MTEAAKTETSLRRTLVGRVVSDKMDKTVTVLIENRVKHPLYGKYVLRSKKYHAHDEANQYKEGDKVEIQETRPLSRTKSWVVSRLVEAARVI.

Belongs to the universal ribosomal protein uS17 family. As to quaternary structure, part of the 30S ribosomal subunit.

Functionally, one of the primary rRNA binding proteins, it binds specifically to the 5'-end of 16S ribosomal RNA. This Cupriavidus metallidurans (strain ATCC 43123 / DSM 2839 / NBRC 102507 / CH34) (Ralstonia metallidurans) protein is Small ribosomal subunit protein uS17.